The following is a 401-amino-acid chain: 2,3,4,5-tetrahydropyridine-2,6-dicarboxylate N-succinyltransferase (401 aa).

Residue Glu269 is the Acyl-anhydride intermediate of the active site. Succinyl-CoA contacts are provided by residues Arg271, Gly286, Ser289, Ala312, 327–328 (DA), Gly335, and Lys364.

The protein belongs to the type 2 tetrahydrodipicolinate N-succinyltransferase family. Homotrimer.

The protein localises to the cytoplasm. The enzyme catalyses (S)-2,3,4,5-tetrahydrodipicolinate + succinyl-CoA + H2O = (S)-2-succinylamino-6-oxoheptanedioate + CoA. It participates in amino-acid biosynthesis; L-lysine biosynthesis via DAP pathway; LL-2,6-diaminopimelate from (S)-tetrahydrodipicolinate (succinylase route): step 1/3. Its function is as follows. Catalyzes the conversion of the cyclic tetrahydrodipicolinate (THDP) into the acyclic N-succinyl-L-2-amino-6-oxopimelate using succinyl-CoA. This chain is 2,3,4,5-tetrahydropyridine-2,6-dicarboxylate N-succinyltransferase, found in Helicobacter pylori (strain ATCC 700392 / 26695) (Campylobacter pylori).